The chain runs to 72 residues: Translation initiation factor IF-1 (72 aa).

In terms of domain architecture, S1-like spans 1–72; the sequence is MAKEDAIELQ…SKGRIVFRAR (72 aa).

Belongs to the IF-1 family. In terms of assembly, component of the 30S ribosomal translation pre-initiation complex which assembles on the 30S ribosome in the order IF-2 and IF-3, IF-1 and N-formylmethionyl-tRNA(fMet); mRNA recruitment can occur at any time during PIC assembly.

It localises to the cytoplasm. One of the essential components for the initiation of protein synthesis. Stabilizes the binding of IF-2 and IF-3 on the 30S subunit to which N-formylmethionyl-tRNA(fMet) subsequently binds. Helps modulate mRNA selection, yielding the 30S pre-initiation complex (PIC). Upon addition of the 50S ribosomal subunit IF-1, IF-2 and IF-3 are released leaving the mature 70S translation initiation complex. The polypeptide is Translation initiation factor IF-1 (Aliivibrio fischeri (strain ATCC 700601 / ES114) (Vibrio fischeri)).